A 219-amino-acid chain; its full sequence is Cytidylate kinase (219 aa).

21-29 (GPAASGKGT) is an ATP binding site.

This sequence belongs to the cytidylate kinase family. Type 1 subfamily.

The protein localises to the cytoplasm. It carries out the reaction CMP + ATP = CDP + ADP. It catalyses the reaction dCMP + ATP = dCDP + ADP. The protein is Cytidylate kinase of Rickettsia akari (strain Hartford).